Reading from the N-terminus, the 510-residue chain is Bifunctional purine biosynthesis protein PurH (510 aa).

The MGS-like domain occupies 1–145; the sequence is MTKRALLSVS…KNFAAVLPIV (145 aa).

The protein belongs to the PurH family.

The enzyme catalyses (6R)-10-formyltetrahydrofolate + 5-amino-1-(5-phospho-beta-D-ribosyl)imidazole-4-carboxamide = 5-formamido-1-(5-phospho-D-ribosyl)imidazole-4-carboxamide + (6S)-5,6,7,8-tetrahydrofolate. It catalyses the reaction IMP + H2O = 5-formamido-1-(5-phospho-D-ribosyl)imidazole-4-carboxamide. It participates in purine metabolism; IMP biosynthesis via de novo pathway; 5-formamido-1-(5-phospho-D-ribosyl)imidazole-4-carboxamide from 5-amino-1-(5-phospho-D-ribosyl)imidazole-4-carboxamide (10-formyl THF route): step 1/1. Its pathway is purine metabolism; IMP biosynthesis via de novo pathway; IMP from 5-formamido-1-(5-phospho-D-ribosyl)imidazole-4-carboxamide: step 1/1. In Lactiplantibacillus plantarum (strain ATCC BAA-793 / NCIMB 8826 / WCFS1) (Lactobacillus plantarum), this protein is Bifunctional purine biosynthesis protein PurH.